A 122-amino-acid chain; its full sequence is Large ribosomal subunit protein uL14 (122 aa).

It belongs to the universal ribosomal protein uL14 family. As to quaternary structure, part of the 50S ribosomal subunit. Forms a cluster with proteins L3 and L19. In the 70S ribosome, L14 and L19 interact and together make contacts with the 16S rRNA in bridges B5 and B8.

Binds to 23S rRNA. Forms part of two intersubunit bridges in the 70S ribosome. This Treponema denticola (strain ATCC 35405 / DSM 14222 / CIP 103919 / JCM 8153 / KCTC 15104) protein is Large ribosomal subunit protein uL14.